The sequence spans 77 residues: Large ribosomal subunit protein bL28 (77 aa).

This sequence belongs to the bacterial ribosomal protein bL28 family.

The protein is Large ribosomal subunit protein bL28 of Dechloromonas aromatica (strain RCB).